Here is a 475-residue protein sequence, read N- to C-terminus: Ribulose bisphosphate carboxylase large chain (475 aa).

The propeptide occupies 1–2 (MS). At Pro3 the chain carries N-acetylproline. The residue at position 14 (Lys14) is an N6,N6,N6-trimethyllysine. Residues Asn123 and Thr173 each contribute to the substrate site. Catalysis depends on Lys175, which acts as the Proton acceptor. Residue Lys177 coordinates substrate. The Mg(2+) site is built by Lys201, Asp203, and Glu204. Lys201 bears the N6-carboxylysine mark. The active-site Proton acceptor is His294. Residues Arg295, His327, and Ser379 each coordinate substrate.

This sequence belongs to the RuBisCO large chain family. Type I subfamily. In terms of assembly, heterohexadecamer of 8 large chains and 8 small chains; disulfide-linked. The disulfide link is formed within the large subunit homodimers. Mg(2+) serves as cofactor. In terms of processing, the disulfide bond which can form in the large chain dimeric partners within the hexadecamer appears to be associated with oxidative stress and protein turnover.

Its subcellular location is the plastid. The protein localises to the chloroplast. The catalysed reaction is 2 (2R)-3-phosphoglycerate + 2 H(+) = D-ribulose 1,5-bisphosphate + CO2 + H2O. The enzyme catalyses D-ribulose 1,5-bisphosphate + O2 = 2-phosphoglycolate + (2R)-3-phosphoglycerate + 2 H(+). RuBisCO catalyzes two reactions: the carboxylation of D-ribulose 1,5-bisphosphate, the primary event in carbon dioxide fixation, as well as the oxidative fragmentation of the pentose substrate in the photorespiration process. Both reactions occur simultaneously and in competition at the same active site. The protein is Ribulose bisphosphate carboxylase large chain of Clarkia xantiana (Gunsight clarkia).